The chain runs to 311 residues: Probable deoxyhypusine synthase (311 aa).

K284 serves as the catalytic Nucleophile.

This sequence belongs to the deoxyhypusine synthase family. The cofactor is NAD(+).

The catalysed reaction is [eIF5A protein]-L-lysine + spermidine = [eIF5A protein]-deoxyhypusine + propane-1,3-diamine. Its pathway is protein modification; eIF5A hypusination. Its function is as follows. Catalyzes the NAD-dependent oxidative cleavage of spermidine and the subsequent transfer of the butylamine moiety of spermidine to the epsilon-amino group of a specific lysine residue of the eIF-5A precursor protein to form the intermediate deoxyhypusine residue. The polypeptide is Probable deoxyhypusine synthase (Sulfolobus acidocaldarius (strain ATCC 33909 / DSM 639 / JCM 8929 / NBRC 15157 / NCIMB 11770)).